A 164-amino-acid chain; its full sequence is Respiratory growth induced protein 2 (164 aa).

This sequence belongs to the RGI1 family.

The protein resides in the cytoplasm. Its function is as follows. Involved in the control of energetic metabolism and significantly contribute to cell fitness, especially under respiratory growth conditions. This chain is Respiratory growth induced protein 2 (RGI2), found in Candida glabrata (strain ATCC 2001 / BCRC 20586 / JCM 3761 / NBRC 0622 / NRRL Y-65 / CBS 138) (Yeast).